The following is a 231-amino-acid chain: Killer cell lectin-like receptor subfamily F member 1 (231 aa).

The Cytoplasmic segment spans residues Met1–Lys38. A Phosphotyrosine modification is found at Tyr7. Residues Ile39–Ile59 form a helical; Signal-anchor for type II membrane protein membrane-spanning segment. Residues Leu60–Tyr231 lie on the Extracellular side of the membrane. N-linked (GlcNAc...) asparagine glycosylation is found at Asn77, Asn91, Asn96, and Asn176. The region spanning Tyr121–Gln230 is the C-type lectin domain. 2 cysteine pairs are disulfide-bonded: Cys142-Cys229 and Cys208-Cys221.

Homodimer. Interacts with CLEC2B. In terms of processing, phosphorylated on Tyr-7; this phosphorylation is required for NKp80/KLRF1-mediated cytotoxicity.

It localises to the membrane. Its function is as follows. Functions as an activating receptor involved in immunosurveillance upon binding to various ligands displayed at the surface of myeloid cells. Upon interaction with CLEC2B ligand, stimulates NK-cell cytotoxicity and cytokine production leading to the cytolysis of malignant CLEC2B-expressing myeloid cells. Actviation of the common cytotoxicity pathway involves SRC and SYK kinases. This chain is Killer cell lectin-like receptor subfamily F member 1 (KLRF1), found in Macaca fascicularis (Crab-eating macaque).